A 405-amino-acid chain; its full sequence is L-carnitine CoA-transferase (405 aa).

CoA contacts are provided by lysine 97 and arginine 104. The Nucleophile role is filled by aspartate 169.

It belongs to the CoA-transferase III family. CaiB subfamily. As to quaternary structure, homodimer.

Its subcellular location is the cytoplasm. The enzyme catalyses crotonobetainyl-CoA + (R)-carnitine = crotonobetaine + (R)-carnitinyl-CoA. It carries out the reaction 4-(trimethylamino)butanoyl-CoA + (R)-carnitine = (R)-carnitinyl-CoA + 4-(trimethylamino)butanoate. The protein operates within amine and polyamine metabolism; carnitine metabolism. Functionally, catalyzes the reversible transfer of the CoA moiety from gamma-butyrobetainyl-CoA to L-carnitine to generate L-carnitinyl-CoA and gamma-butyrobetaine. Is also able to catalyze the reversible transfer of the CoA moiety from gamma-butyrobetainyl-CoA or L-carnitinyl-CoA to crotonobetaine to generate crotonobetainyl-CoA. In Escherichia coli O6:K15:H31 (strain 536 / UPEC), this protein is L-carnitine CoA-transferase.